The chain runs to 180 residues: Type-1 fimbrial protein, C chain (180 aa).

A signal peptide spans 1-23 (MKLKFISMAVFSALTLGVATNAS). Residues Cys-44 and Cys-84 are joined by a disulfide bond.

The protein belongs to the fimbrial protein family.

The protein localises to the fimbrium. Fimbriae (also called pili), polar filaments radiating from the surface of the bacterium to a length of 0.5-1.5 micrometers and numbering 100-300 per cell, enable bacteria to colonize the epithelium of specific host organs. The polypeptide is Type-1 fimbrial protein, C chain (pilC) (Escherichia coli O6:H1 (strain CFT073 / ATCC 700928 / UPEC)).